Here is an 87-residue protein sequence, read N- to C-terminus: Small ribosomal subunit protein uS15c (87 aa).

The protein belongs to the universal ribosomal protein uS15 family. In terms of assembly, part of the 30S ribosomal subunit.

Its subcellular location is the plastid. It localises to the chloroplast. The sequence is that of Small ribosomal subunit protein uS15c (rps15) from Coffea arabica (Arabian coffee).